The sequence spans 323 residues: HPr kinase/phosphorylase (323 aa).

Active-site residues include histidine 146 and lysine 167. 161 to 168 is a binding site for ATP; that stretch reads GESGLGKS. Residue serine 168 coordinates Mg(2+). Aspartate 185 functions as the Proton acceptor; for phosphorylation activity. Proton donor; for dephosphorylation activity in the catalytic mechanism. Residues 209–218 are important for the catalytic mechanism of both phosphorylation and dephosphorylation; it reads LEVRGLGLLD. Glutamate 210 contacts Mg(2+). Arginine 250 is an active-site residue. Residues 271 to 276 form an important for the catalytic mechanism of dephosphorylation region; that stretch reads QVAAGR.

Belongs to the HPrK/P family. As to quaternary structure, homohexamer. Mg(2+) serves as cofactor.

The enzyme catalyses [HPr protein]-L-serine + ATP = [HPr protein]-O-phospho-L-serine + ADP + H(+). It carries out the reaction [HPr protein]-O-phospho-L-serine + phosphate + H(+) = [HPr protein]-L-serine + diphosphate. Its function is as follows. Catalyzes the ATP- as well as the pyrophosphate-dependent phosphorylation of a specific serine residue in HPr, a phosphocarrier protein of the phosphoenolpyruvate-dependent sugar phosphotransferase system (PTS). HprK/P also catalyzes the pyrophosphate-producing, inorganic phosphate-dependent dephosphorylation (phosphorolysis) of seryl-phosphorylated HPr (P-Ser-HPr). In Cupriavidus metallidurans (strain ATCC 43123 / DSM 2839 / NBRC 102507 / CH34) (Ralstonia metallidurans), this protein is HPr kinase/phosphorylase.